The primary structure comprises 318 residues: Ferrochelatase (318 aa).

2 residues coordinate Fe cation: His186 and Glu264.

Belongs to the ferrochelatase family.

The protein resides in the cytoplasm. The catalysed reaction is heme b + 2 H(+) = protoporphyrin IX + Fe(2+). It functions in the pathway porphyrin-containing compound metabolism; protoheme biosynthesis; protoheme from protoporphyrin-IX: step 1/1. In terms of biological role, catalyzes the ferrous insertion into protoporphyrin IX. This is Ferrochelatase from Chlamydia abortus (strain DSM 27085 / S26/3) (Chlamydophila abortus).